We begin with the raw amino-acid sequence, 95 residues long: Putative small ubiquitin-related modifier 7 (95 aa).

Residues 13–90 (SHITIKIKSQ…IDAFVDQIAG (78 aa)) form the Ubiquitin-like domain. Residue Gly90 forms a Glycyl lysine isopeptide (Gly-Lys) (interchain with K-? in acceptor proteins) linkage.

This sequence belongs to the ubiquitin family. SUMO subfamily. As to quaternary structure, interacts with SAE2, SCE1, SIZ1 and MMS21 Covalently attached to a number of proteins.

It localises to the nucleus. Its subcellular location is the cytoplasm. Ubiquitin-like protein which can be covalently attached to target lysines as a monomer. Does not seem to be involved in protein degradation and may function as an antagonist of ubiquitin in the degradation process. The polypeptide is Putative small ubiquitin-related modifier 7 (SUMO7) (Arabidopsis thaliana (Mouse-ear cress)).